The sequence spans 220 residues: U1 small nuclear ribonucleoprotein C (220 aa).

The Matrin-type zinc-finger motif lies at 4 to 36; the sequence is FFCDYCDVYLTHDSISVRKAHNSGRNHLRNVVD. Positions 197–220 are disordered; that stretch reads PLGGFPAGAPLPGAPPGYGPPGAK. Positions 208–220 are enriched in pro residues; the sequence is PGAPPGYGPPGAK.

This sequence belongs to the U1 small nuclear ribonucleoprotein C family. In terms of assembly, U1 snRNP is composed of the 7 core Sm proteins B/B', D1, D2, D3, E, F and G that assemble in a heptameric protein ring on the Sm site of the small nuclear RNA to form the core snRNP, and at least 3 U1 snRNP-specific proteins U1-70K, U1-A and U1-C. U1-C interacts with U1 snRNA and the 5' splice-site region of the pre-mRNA.

The protein localises to the nucleus. In terms of biological role, component of the spliceosomal U1 snRNP, which is essential for recognition of the pre-mRNA 5' splice-site and the subsequent assembly of the spliceosome. U1-C is directly involved in initial 5' splice-site recognition for both constitutive and regulated alternative splicing. The interaction with the 5' splice-site seems to precede base-pairing between the pre-mRNA and the U1 snRNA. Stimulates commitment or early (E) complex formation by stabilizing the base pairing of the 5' end of the U1 snRNA and the 5' splice-site region. This Tuber melanosporum (strain Mel28) (Perigord black truffle) protein is U1 small nuclear ribonucleoprotein C.